A 172-amino-acid polypeptide reads, in one-letter code: Cell division protein SepF (172 aa).

Positions 18 to 73 (RRYDEEDLPDEELTTEVYSDDGYEPSSEVTQLHHHDSNEQHARGHKAVQHRRRSEL) are disordered. Positions 22–40 (EEDLPDEELTTEVYSDDGY) are enriched in acidic residues. Residues 48 to 59 (QLHHHDSNEQHA) are compositionally biased toward basic and acidic residues. Residues 60 to 70 (RGHKAVQHRRR) show a composition bias toward basic residues.

Belongs to the SepF family. Homodimer. Interacts with FtsZ.

The protein resides in the cytoplasm. In terms of biological role, cell division protein that is part of the divisome complex and is recruited early to the Z-ring. Probably stimulates Z-ring formation, perhaps through the cross-linking of FtsZ protofilaments. Its function overlaps with FtsA. This chain is Cell division protein SepF, found in Cutibacterium acnes (strain DSM 16379 / KPA171202) (Propionibacterium acnes).